Reading from the N-terminus, the 1037-residue chain is Caspase recruitment domain-containing protein 6 (1037 aa).

N-acetylalanine is present on Ala-2. In terms of domain architecture, CARD spans 3–94; sequence TESTPSEIIE…QSAAICGLRH (92 aa). Residue Ser-154 is modified to Phosphoserine. 3 disordered regions span residues 235–270, 669–704, and 887–1037; these read DPEH…TSLS, VSSG…PIQE, and RTSH…GGKH. A compositionally biased stretch (acidic residues) spans 242 to 261; that stretch reads DGEEDFENSETTEFSGEEPS. A compositionally biased stretch (low complexity) spans 690–699; that stretch reads LKSSSKSQAL. Composition is skewed to polar residues over residues 911–928, 938–954, and 963–984; these read ASQQ…SNPA, KSSQ…TVKH, and VPSQ…QTKP. Ser-985 is subject to Phosphoserine. The segment covering 994 to 1012 has biased composition (pro residues); sequence PSQPWPPQSKPSQPRPPQP. Residues 1023-1037 show a composition bias toward basic residues; that stretch reads KAHHSKAGQKRGGKH.

Functionally, may be involved in apoptosis. The sequence is that of Caspase recruitment domain-containing protein 6 (CARD6) from Homo sapiens (Human).